We begin with the raw amino-acid sequence, 148 residues long: Azurin (148 aa).

The signal sequence occupies residues 1 to 18; sequence MRNQLLFALAFIPTIAAA. Residues 19 to 148 enclose the Plastocyanin-like domain; the sequence is ASNCEVNVSA…MMRGTVKLVD (130 aa). Cysteine 22 and cysteine 45 are joined by a disulfide. Cu cation contacts are provided by histidine 65, cysteine 131, histidine 136, and methionine 140.

Its subcellular location is the periplasm. It participates in one-carbon metabolism; methylamine degradation. In terms of biological role, probable electron acceptor for methylamine dehydrogenase. This Methylobacillus flagellatus (strain ATCC 51484 / DSM 6875 / VKM B-1610 / KT) protein is Azurin (azu).